A 400-amino-acid chain; its full sequence is 3-hydroxykynurenine transaminase (400 aa).

The binds to and confers specificity for 3-hydroxykynurenine; shared with dimeric partner stretch occupies residues 43–44 (SN). Pyridoxal 5'-phosphate contacts are provided by residues 77–79 (SAH), Ser-154, and Gln-204. Position 154 (Ser-154) interacts with substrate. N6-(pyridoxal phosphate)lysine is present on Lys-205. Tyr-256 and Thr-259 together coordinate pyridoxal 5'-phosphate. Arg-356 provides a ligand contact to substrate.

This sequence belongs to the class-V pyridoxal-phosphate-dependent aminotransferase family. In terms of assembly, homodimer. May form homotetramer. Pyridoxal 5'-phosphate is required as a cofactor.

The protein localises to the peroxisome. It catalyses the reaction glyoxylate + L-alanine = glycine + pyruvate. The enzyme catalyses L-kynurenine + glyoxylate = kynurenate + glycine + H2O. It carries out the reaction 3-hydroxy-L-kynurenine + glyoxylate = xanthurenate + glycine + H2O. The catalysed reaction is 3-hydroxy-L-kynurenine + pyruvate = xanthurenate + L-alanine + H2O. It catalyses the reaction L-kynurenine + pyruvate = kynurenate + L-alanine + H2O. The enzyme catalyses 2-oxobutanoate + L-alanine = (2S)-2-aminobutanoate + pyruvate. It carries out the reaction L-phenylalanine + pyruvate = 3-phenylpyruvate + L-alanine. The catalysed reaction is L-serine + pyruvate = 3-hydroxypyruvate + L-alanine. It catalyses the reaction L-cysteine + pyruvate = 2-oxo-3-sulfanylpropanoate + L-alanine. The enzyme catalyses 3-hydroxy-L-kynurenine + oxaloacetate = 4-(2-amino-3-hydroxyphenyl)-2,4-dioxobutanoate + L-aspartate. It carries out the reaction 3-hydroxy-L-kynurenine + 3-phenylpyruvate = 4-(2-amino-3-hydroxyphenyl)-2,4-dioxobutanoate + L-phenylalanine. The catalysed reaction is L-kynurenine + oxaloacetate = 4-(2-aminophenyl)-2,4-dioxobutanoate + L-aspartate. It catalyses the reaction 3-phenylpyruvate + L-kynurenine = 4-(2-aminophenyl)-2,4-dioxobutanoate + L-phenylalanine. The protein operates within amino-acid degradation; L-kynurenine degradation; kynurenate from L-kynurenine: step 1/2. Its function is as follows. Catalyzes the pyridoxal 5'-phosphate-dependent transamination of both 3-hydroxykynurenine and L-kynurenine to xanthurenic acid and kynurenic acid, respectively, preferentially using the alpha-ketoacid pyruvate, glyoxylate or oxaloacetate as the amino group acceptor. The affinity and catalytic efficiency for 3-hydroxykynurenine is higher than for L-kynurenine. Involved in the detoxification of cytotoxic metabolite 3-hydroxykynurenine generated by the hydroxylation of L-kynurenine, an intermediate in the tryptophan catabolism pathway. Also catalyzes, although with a lesser efficiency, the transamination of alanine with glyoxylate as an amino group acceptor. May play a role in the detoxification of glyoxylate, a toxic plant metabolite from the diet. The polypeptide is 3-hydroxykynurenine transaminase (Aedes aegypti (Yellowfever mosquito)).